Consider the following 394-residue polypeptide: MPVSASLAYKNYDYDYDSIQPYFYFDNDDEDFYHHQQGQTQPPAPSEDIWKKFELLPTPPLSPSRRQSLSTAEQLEMVSEFLGDDVVNQSFICDADYSQSFIKSIIIQDCMWSGFSAAAKLEKVVSERLASLHAARKELMSDSSSNRLNASYLQDVSTSASECIDPSVVFPYPLPESGKSSKVAPSEPMPVLDTPPNSSSSSGSDSEEEEEEEEEEEEEEEEEEIDVVTVEKRQKKNETAVSDSRYPSPLVLKRCHVSTHQHNYAAHPSTRHDQPAVKRLRLEASSNSNSRHVKQRKCTSPRTSDSEDNDKRRTHNVLERQRRNELKLSFFALRDEIPDVANNEKAAKVVILKKATECIHSMQLDEQRLLSIKEQLRRKSEQLKHRLQLLRSSH.

O-linked (GlcNAc) threonine glycosylation is present at Thr58. Residues 76–84 (EMVSEFLGD) carry the 9aaTAD motif. Disordered stretches follow at residues 177-247 (SGKS…SRYP) and 283-318 (EASS…HNVL). The span at 205–226 (DSEEEEEEEEEEEEEEEEEEID) shows a compositional bias: acidic residues. Over residues 229–238 (TVEKRQKKNE) the composition is skewed to basic and acidic residues. The bHLH domain occupies 310–362 (DKRRTHNVLERQRRNELKLSFFALRDEIPDVANNEKAAKVVILKKATECIHSM). The tract at residues 369–390 (LLSIKEQLRRKSEQLKHRLQLL) is leucine-zipper.

Efficient DNA binding requires dimerization with another bHLH protein. Binds DNA as a heterodimer with MAX.

It localises to the nucleus. Transcription factor that binds DNA in a non-specific manner, yet also specifically recognizes the core sequence 5'-CAC[GA]TG-3'. Activates the transcription of growth-related genes. In Cyprinus carpio (Common carp), this protein is Transcriptional regulator Myc-1 (myca).